A 415-amino-acid chain; its full sequence is Serine hydroxymethyltransferase (415 aa).

(6S)-5,6,7,8-tetrahydrofolate is bound by residues L121 and 125 to 127; that span reads GHL. Position 230 is an N6-(pyridoxal phosphate)lysine (K230). Position 355-357 (355-357) interacts with (6S)-5,6,7,8-tetrahydrofolate; sequence SPF.

It belongs to the SHMT family. In terms of assembly, homodimer. Requires pyridoxal 5'-phosphate as cofactor.

It is found in the cytoplasm. It catalyses the reaction (6R)-5,10-methylene-5,6,7,8-tetrahydrofolate + glycine + H2O = (6S)-5,6,7,8-tetrahydrofolate + L-serine. It participates in one-carbon metabolism; tetrahydrofolate interconversion. It functions in the pathway amino-acid biosynthesis; glycine biosynthesis; glycine from L-serine: step 1/1. Its function is as follows. Catalyzes the reversible interconversion of serine and glycine with tetrahydrofolate (THF) serving as the one-carbon carrier. This reaction serves as the major source of one-carbon groups required for the biosynthesis of purines, thymidylate, methionine, and other important biomolecules. Also exhibits THF-independent aldolase activity toward beta-hydroxyamino acids, producing glycine and aldehydes, via a retro-aldol mechanism. The protein is Serine hydroxymethyltransferase of Lactococcus lactis subsp. cremoris (strain MG1363).